Here is a 415-residue protein sequence, read N- to C-terminus: tRNA(Met) cytidine acetate ligase (415 aa).

ATP-binding positions include V7 to H20, G101, N162, and R187 to I188.

The protein belongs to the TmcAL family.

The protein localises to the cytoplasm. It catalyses the reaction cytidine(34) in elongator tRNA(Met) + acetate + ATP = N(4)-acetylcytidine(34) in elongator tRNA(Met) + AMP + diphosphate. Catalyzes the formation of N(4)-acetylcytidine (ac(4)C) at the wobble position of elongator tRNA(Met), using acetate and ATP as substrates. First activates an acetate ion to form acetyladenylate (Ac-AMP) and then transfers the acetyl group to tRNA to form ac(4)C34. This is tRNA(Met) cytidine acetate ligase from Bacillus velezensis (strain DSM 23117 / BGSC 10A6 / LMG 26770 / FZB42) (Bacillus amyloliquefaciens subsp. plantarum).